A 72-amino-acid polypeptide reads, in one-letter code: MSAIFNFQSLLTVILLLICTCAYIRSLAPSLLDRNKTGLLGIFWKCARIGERKSPYVAVCCIVMAFSILFIQ.

Residues M1–S26 form the signal peptide. At L27–K53 the chain is on the extracellular side. N-linked (GlcNAc...) asparagine glycosylation occurs at N35. The chain crosses the membrane as a helical span at residues S54 to I71. A topological domain (cytoplasmic) is located at residue Q72.

The protein belongs to the KISH family.

The protein resides in the golgi apparatus membrane. Functionally, involved in the early part of the secretory pathway. This is Protein kish-A (TMEM167A) from Bos taurus (Bovine).